Reading from the N-terminus, the 434-residue chain is Enolase (434 aa).

(2R)-2-phosphoglycerate is bound at residue glutamine 166. Glutamate 208 acts as the Proton donor in catalysis. Positions 245, 290, and 317 each coordinate Mg(2+). Residues lysine 342, arginine 371, serine 372, and lysine 393 each coordinate (2R)-2-phosphoglycerate. Lysine 342 serves as the catalytic Proton acceptor.

The protein belongs to the enolase family. The cofactor is Mg(2+).

Its subcellular location is the cytoplasm. It is found in the secreted. The protein localises to the cell surface. The enzyme catalyses (2R)-2-phosphoglycerate = phosphoenolpyruvate + H2O. It participates in carbohydrate degradation; glycolysis; pyruvate from D-glyceraldehyde 3-phosphate: step 4/5. Functionally, catalyzes the reversible conversion of 2-phosphoglycerate (2-PG) into phosphoenolpyruvate (PEP). It is essential for the degradation of carbohydrates via glycolysis. The polypeptide is Enolase (Caldicellulosiruptor bescii (strain ATCC BAA-1888 / DSM 6725 / KCTC 15123 / Z-1320) (Anaerocellum thermophilum)).